Reading from the N-terminus, the 209-residue chain is Large ribosomal subunit protein bL25 (209 aa).

The protein belongs to the bacterial ribosomal protein bL25 family. CTC subfamily. Part of the 50S ribosomal subunit; part of the 5S rRNA/L5/L18/L25 subcomplex. Contacts the 5S rRNA. Binds to the 5S rRNA independently of L5 and L18.

Its function is as follows. This is one of the proteins that binds to the 5S RNA in the ribosome where it forms part of the central protuberance. The polypeptide is Large ribosomal subunit protein bL25 (Xanthomonas campestris pv. campestris (strain B100)).